A 168-amino-acid polypeptide reads, in one-letter code: Phosphopantetheine adenylyltransferase (168 aa).

A substrate-binding site is contributed by threonine 14. ATP-binding positions include 14 to 15 and histidine 22; that span reads TF. Substrate contacts are provided by lysine 46, leucine 78, and arginine 92. ATP contacts are provided by residues 93–95, glutamate 103, and 128–134; these read GLR and YSFISSS.

Belongs to the bacterial CoaD family. Homohexamer. The cofactor is Mg(2+).

The protein localises to the cytoplasm. The enzyme catalyses (R)-4'-phosphopantetheine + ATP + H(+) = 3'-dephospho-CoA + diphosphate. It participates in cofactor biosynthesis; coenzyme A biosynthesis; CoA from (R)-pantothenate: step 4/5. In terms of biological role, reversibly transfers an adenylyl group from ATP to 4'-phosphopantetheine, yielding dephospho-CoA (dPCoA) and pyrophosphate. The chain is Phosphopantetheine adenylyltransferase from Xanthomonas oryzae pv. oryzae (strain MAFF 311018).